The primary structure comprises 301 residues: Glycine--tRNA ligase alpha subunit (301 aa).

It belongs to the class-II aminoacyl-tRNA synthetase family. Tetramer of two alpha and two beta subunits.

The protein resides in the cytoplasm. The enzyme catalyses tRNA(Gly) + glycine + ATP = glycyl-tRNA(Gly) + AMP + diphosphate. The chain is Glycine--tRNA ligase alpha subunit from Polaromonas sp. (strain JS666 / ATCC BAA-500).